The sequence spans 301 residues: Hydroxymethylglutaryl-CoA lyase (301 aa).

In terms of domain architecture, Pyruvate carboxyltransferase spans 4–271; sequence VKVFEVGPRD…STGVDLEAVA (268 aa). R12 is a binding site for substrate. A divalent metal cation-binding residues include D13, H204, and H206. C237 is an active-site residue. N246 provides a ligand contact to a divalent metal cation.

This sequence belongs to the HMG-CoA lyase family.

The enzyme catalyses (3S)-3-hydroxy-3-methylglutaryl-CoA = acetoacetate + acetyl-CoA. The protein operates within metabolic intermediate metabolism; (S)-3-hydroxy-3-methylglutaryl-CoA degradation; acetoacetate from (S)-3-hydroxy-3-methylglutaryl-CoA: step 1/1. Involved in the catabolism of branched amino acids such as leucine. This is Hydroxymethylglutaryl-CoA lyase (mvaB) from Pseudomonas mevalonii.